Reading from the N-terminus, the 696-residue chain is Verrucotoxin subunit beta (696 aa).

The region spanning 506–696 is the B30.2/SPRY domain; the sequence is HMPGVETIKD…GCTTESQWSN (191 aa).

This sequence belongs to the SNTX/VTX toxin family. In terms of assembly, tetramer composed of 2 alpha and 2 beta subunits. Glycosylated. In terms of tissue distribution, expressed by the venom gland.

It is found in the secreted. This lethal (towards mice) toxin induces hemolytic, cytolytic and hypotensive activities. Inhibits calcium channels and may activate ATP-sensitive potassium channels in frog atrial heart muscle. In guinea-pig ventricular myocytes, it modulates calcium channel activity through the beta-adrenoceptor-cAMP-PKA pathway (ADRB). The chain is Verrucotoxin subunit beta from Synanceia verrucosa (Reef stonefish).